The following is a 452-amino-acid chain: Flavanone 7-O-glucoside 2''-O-beta-L-rhamnosyltransferase (452 aa).

His-21 (proton acceptor) is an active-site residue. His-21 contacts an anthocyanidin. Asp-121 functions as the Charge relay in the catalytic mechanism. The chain crosses the membrane as a helical span at residues 136-156 (IAAILFLPLSAVACSFLLHNI). UDP-beta-L-rhamnose contacts are provided by Ser-268, Val-330, His-347, Gly-351, Ser-352, and Glu-355. Residues 407-436 (KHVVLQEEAKQIRRKANEISESMKKIGDAE) adopt a coiled-coil conformation.

The protein belongs to the UDP-glycosyltransferase family. As to quaternary structure, monomer. As to expression, expressed in young fruits and leaves.

Its subcellular location is the membrane. The catalysed reaction is flavanone 7-O-beta-D-glucoside + UDP-beta-L-rhamnose = flavanone 7-O-[alpha-L-rhamnosyl-(1-&gt;2)-beta-D-glucoside] + UDP + H(+). Functionally, involved in the production of the bitter neohesperidosides in citrus. Shows a strict specificity for UDP-rhamnose as donor. In Citrus maxima (Pomelo), this protein is Flavanone 7-O-glucoside 2''-O-beta-L-rhamnosyltransferase (C12RT1).